Reading from the N-terminus, the 158-residue chain is L-alanine exporter AlaE (158 aa).

The next 4 helical transmembrane spans lie at 23–43 (FAMV…VSGM), 53–73 (LVAI…RDAV), 92–112 (VIAY…FVGA), and 117–137 (IITA…AYGY).

This sequence belongs to the AlaE exporter family.

Its subcellular location is the cell inner membrane. Functionally, exports L-alanine. The chain is L-alanine exporter AlaE from Cronobacter sakazakii (strain ATCC BAA-894) (Enterobacter sakazakii).